The following is a 388-amino-acid chain: Probable proton-coupled zinc antiporter SLC30A3 (388 aa).

Over residues 1-13 (MEPSPTTGGSETT) the composition is skewed to polar residues. Disordered regions lie at residues 1 to 30 (MEPS…GLRL) and 35 to 54 (TEAP…SFHH). The Cytoplasmic portion of the chain corresponds to 1–75 (MEPSPTTGGS…TPERMQAQRQ (75 aa)). The helical transmembrane segment at 76–96 (LCTACAVCCVFMAGEVVGGYL) threads the bilayer. Over 97–105 (AHSLAIMTD) the chain is Lumenal. A helical transmembrane segment spans residues 106–126 (AAHLLADVGSMMGSLFSLWLS). Zn(2+)-binding residues include histidine 108 and aspartate 112. At 127-145 (TRPATRTMTFGWHRSETLG) the chain is on the cytoplasmic side. A helical membrane pass occupies residues 146-166 (ALASVVSLWMVTGILLYLAFI). At 167–177 (RLLHSDYHIEG) the chain is on the lumenal side. The helical transmembrane segment at 178-198 (GAMLLTASIAVCANLLMAFVL) threads the bilayer. Over 199–235 (HQAGPPHSHGSRGAEYAPLEEGSGEPLPLGNTSVRAA) the chain is Cytoplasmic. A helical transmembrane segment spans residues 236-256 (FVHVLGDLLQSLGVLIASILI). Residues histidine 238 and aspartate 242 each contribute to the Zn(2+) site. At 257 to 264 (YFKPQYKA) the chain is on the lumenal side. The helical transmembrane segment at 265–285 (ADPISTFLFSICALGSTAPTL) threads the bilayer. Residues 286-388 (RDVLRVLMEG…CLRCQEPPQA (103 aa)) lie on the Cytoplasmic side of the membrane.

This sequence belongs to the cation diffusion facilitator (CDF) transporter (TC 2.A.4) family. SLC30A subfamily. Homodimer. Homodimerization could regulate efficiency of zinc transport. Interacts with TMEM163.

It localises to the cytoplasmic vesicle. The protein localises to the secretory vesicle. Its subcellular location is the synaptic vesicle membrane. It is found in the synapse. The protein resides in the synaptosome. It localises to the late endosome membrane. The protein localises to the lysosome membrane. It catalyses the reaction Zn(2+)(in) + 2 H(+)(out) = Zn(2+)(out) + 2 H(+)(in). Its function is as follows. Probable proton-coupled zinc ion antiporter mediating the import of zinc from cytoplasm into synaptic vesicles and participating to cellular zinc ion homeostasis in the brain. This Bos taurus (Bovine) protein is Probable proton-coupled zinc antiporter SLC30A3.